Consider the following 179-residue polypeptide: uncharacterized protein (179 aa).

The segment at 53–82 (SPEREDPESPTRGVDEVDGACSEPPTPRPE) is disordered. Over residues 54-67 (PEREDPESPTRGVD) the composition is skewed to basic and acidic residues.

This is an uncharacterized protein from Ictaluridae (bullhead catfishes).